The following is a 42-amino-acid chain: Photosystem I reaction center subunit IX (42 aa).

A helical transmembrane segment spans residues 7 to 27 (YLSVAPVLATLWFGSLAGLLI).

Belongs to the PsaJ family.

The protein localises to the plastid. It is found in the chloroplast thylakoid membrane. Functionally, may help in the organization of the PsaE and PsaF subunits. In Chloranthus spicatus (Chulantree), this protein is Photosystem I reaction center subunit IX.